Consider the following 205-residue polypeptide: LexA repressor (205 aa).

The H-T-H motif DNA-binding region spans 28 to 48 (RAEIATRLGFKSANAAEEHLK). Active-site for autocatalytic cleavage activity residues include Ser122 and Lys159.

The protein belongs to the peptidase S24 family. In terms of assembly, homodimer.

The catalysed reaction is Hydrolysis of Ala-|-Gly bond in repressor LexA.. Its function is as follows. Represses a number of genes involved in the response to DNA damage (SOS response), including recA and lexA. In the presence of single-stranded DNA, RecA interacts with LexA causing an autocatalytic cleavage which disrupts the DNA-binding part of LexA, leading to derepression of the SOS regulon and eventually DNA repair. This is LexA repressor from Shewanella denitrificans (strain OS217 / ATCC BAA-1090 / DSM 15013).